Reading from the N-terminus, the 393-residue chain is NAD(P)H-quinone oxidoreductase subunit H, chloroplastic (393 aa).

Belongs to the complex I 49 kDa subunit family. As to quaternary structure, NDH is composed of at least 16 different subunits, 5 of which are encoded in the nucleus.

Its subcellular location is the plastid. The protein localises to the chloroplast thylakoid membrane. It catalyses the reaction a plastoquinone + NADH + (n+1) H(+)(in) = a plastoquinol + NAD(+) + n H(+)(out). The catalysed reaction is a plastoquinone + NADPH + (n+1) H(+)(in) = a plastoquinol + NADP(+) + n H(+)(out). Its function is as follows. NDH shuttles electrons from NAD(P)H:plastoquinone, via FMN and iron-sulfur (Fe-S) centers, to quinones in the photosynthetic chain and possibly in a chloroplast respiratory chain. The immediate electron acceptor for the enzyme in this species is believed to be plastoquinone. Couples the redox reaction to proton translocation, and thus conserves the redox energy in a proton gradient. The sequence is that of NAD(P)H-quinone oxidoreductase subunit H, chloroplastic from Amborella trichopoda.